The chain runs to 507 residues: MDYPPLKGAALAWVTLSLGLAVFMEVLDTTIANVAVPVIAGNLGAATTQGTWVITSFSVANAVSVPLTGFLAKRIGEVKLFTAAAAGFVIASWLCGIAPNLQSLVVFRILQGFIAGPLIPLSQSLLMASYPPAKRMLALALWAMTVVVAPVLGPILGGWISGNWHWGWIFFINIPIGIISAWITWKHLKHRETATVRTPTDYVGLTLMMVGIGALQMMLDRGKELDWFASGEIITLGITALVCLSYFIVWELGEKYPIVDLSLFKDRNFTVGAIATSLGFMVYMGTLTLLPLVLQTNLGYTSAWAGLAAAPVGILPVFLSPLIGRFGNKIDMRLLVTASFLTFAFTFYWRTDFYADMDIGNVIWPQFWQGVGVAMFFLPLTTITLSHMKGGQIAAAGSLSNFLRVLMGGVGVSVVSTLWERREALHHTRFAEHITPYSATLHETAAHLSQQGISDGQTLGIINNTITQQGFIIGSNEIFLAGSILFIVLIPIVWLAKPPFHSGGGGH.

The next 14 helical transmembrane spans lie at 8–28 (GAAL…EVLD), 52–72 (WVIT…GFLA), 78–98 (VKLF…CGIA), 109–129 (ILQG…LMAS), 136–156 (MLAL…GPIL), 164–184 (WHWG…AWIT), 199–219 (PTDY…QMML), 233–253 (IITL…WELG), 274–294 (IATS…PLVL), 303–323 (AWAG…SPLI), 334–354 (LLVT…TDFY), 363–383 (IWPQ…LTTI), 399–419 (LSNF…STLW), and 478–498 (IFLA…LAKP).

It belongs to the major facilitator superfamily. EmrB family. Probably part of a tripartite efflux system FarAB-MtrE, which is composed of an inner membrane transporter, FarB, a periplasmic membrane fusion protein, FarA, and an outer membrane component, MtrE.

It is found in the cell inner membrane. In terms of biological role, mediates resistance to long-chained antibacterial fatty acids (FAs). Function is dependent on the MtrE outer membrane protein. The polypeptide is Fatty acid resistance protein FarB (Neisseria gonorrhoeae).